We begin with the raw amino-acid sequence, 173 residues long: Zinc finger matrin-type protein 5 (173 aa).

The C3H1-type zinc-finger motif lies at 51–79; it reads ERSKEVCRKFVQTGQCVFGTSCRFSHMSE. The interval 83-111 is disordered; it reads KMLEQKIDDEKRQKEDPDQDGSSERSVDE.

As to quaternary structure, component of the U11/U12 snRNPs that are part of the U12-type spliceosome.

It localises to the nucleus. In Danio rerio (Zebrafish), this protein is Zinc finger matrin-type protein 5 (zmat5).